The following is a 243-amino-acid chain: MPERRGIVLVNAVSEKDLGEDKRKREKEKECEKLRKLLVEGLEGFVIDEKVLQAMLRVPRHRFVPEYEQRAAYVDMPLEIGHGQTISAPHMVAMMCEILELAEGHKVLEIGAGSGYNAAVMSELVGKTGHIYTVERVEPLANFAKKNLKEAGYKNVTVLLENGSMGYPGYAPYDRIAVTCAAPNIPETLLEQLKPGGIMVIPVGSYSQELIRVKKDSTGKIYRKKKGDVIFVPMIGKHGFRRI.

Ser87 is an active-site residue.

It belongs to the methyltransferase superfamily. L-isoaspartyl/D-aspartyl protein methyltransferase family.

Its subcellular location is the cytoplasm. It carries out the reaction [protein]-L-isoaspartate + S-adenosyl-L-methionine = [protein]-L-isoaspartate alpha-methyl ester + S-adenosyl-L-homocysteine. Its function is as follows. Catalyzes the methyl esterification of L-isoaspartyl residues in peptides and proteins that result from spontaneous decomposition of normal L-aspartyl and L-asparaginyl residues. It plays a role in the repair and/or degradation of damaged proteins. This Methanosarcina mazei (strain ATCC BAA-159 / DSM 3647 / Goe1 / Go1 / JCM 11833 / OCM 88) (Methanosarcina frisia) protein is Protein-L-isoaspartate O-methyltransferase.